Reading from the N-terminus, the 425-residue chain is Nuclear hormone receptor family member nhr-13 (425 aa).

Residues 5-83 (PNSCEVCSSS…IGMKPLLVKS (79 aa)) constitute a DNA-binding region (nuclear receptor). NR C4-type zinc fingers lie at residues 11 to 30 (CSSS…CKAC) and 46 to 71 (CIDQ…LKKC). The tract at residues 108–148 (VKENSEEIQNDDDPQESDAEMENESTPGPSSEPSENVSAEN) is disordered. Residues 113–130 (EEIQNDDDPQESDAEMEN) are compositionally biased toward acidic residues. The span at 131–142 (ESTPGPSSEPSE) shows a compositional bias: low complexity. The 268-residue stretch at 147–414 (ENQETVTKFL…KSMISLTSFW (268 aa)) folds into the NR LBD domain.

The protein belongs to the nuclear hormone receptor family. As to quaternary structure, may interact with nuclear hormone receptor nhr-49.

It localises to the nucleus. Its function is as follows. Orphan nuclear receptor. Involved in regulating fatty acid desaturase genes, acting in concert with nuclear hormone receptor nhr-49. This chain is Nuclear hormone receptor family member nhr-13 (nhr-13), found in Caenorhabditis elegans.